The primary structure comprises 132 residues: Glycine cleavage system H protein (132 aa).

A Lipoyl-binding domain is found at 24–107 (TATIGLSAFA…GEEGWLIKVR (84 aa)). Lys-65 carries the N6-lipoyllysine modification.

It belongs to the GcvH family. As to quaternary structure, the glycine cleavage system is composed of four proteins: P, T, L and H. (R)-lipoate is required as a cofactor.

The glycine cleavage system catalyzes the degradation of glycine. The H protein shuttles the methylamine group of glycine from the P protein to the T protein. The polypeptide is Glycine cleavage system H protein (Synechocystis sp. (strain ATCC 27184 / PCC 6803 / Kazusa)).